The primary structure comprises 301 residues: GTP cyclohydrolase FolE2 (301 aa).

It belongs to the GTP cyclohydrolase IV family.

It catalyses the reaction GTP + H2O = 7,8-dihydroneopterin 3'-triphosphate + formate + H(+). The protein operates within cofactor biosynthesis; 7,8-dihydroneopterin triphosphate biosynthesis; 7,8-dihydroneopterin triphosphate from GTP: step 1/1. Functionally, converts GTP to 7,8-dihydroneopterin triphosphate. This Exiguobacterium sibiricum (strain DSM 17290 / CCUG 55495 / CIP 109462 / JCM 13490 / 255-15) protein is GTP cyclohydrolase FolE2.